A 140-amino-acid polypeptide reads, in one-letter code: Protein ARABIDOPSIS THALIANA ANTHER 7 (140 aa).

Residues 1-20 form the signal peptide; it reads MKIHAILVVAFLVLMKTAVS. 4 cysteine pairs are disulfide-bonded: C29-C87, C39-C54, C55-C111, and C85-C125.

This sequence belongs to the plant LTP family. In terms of tissue distribution, tapetum-specific. Also present in pollen.

The protein resides in the endoplasmic reticulum lumen. The protein is Protein ARABIDOPSIS THALIANA ANTHER 7 of Arabidopsis thaliana (Mouse-ear cress).